The sequence spans 213 residues: Protein-L-isoaspartate O-methyltransferase (213 aa).

Ser64 is an active-site residue.

Belongs to the methyltransferase superfamily. L-isoaspartyl/D-aspartyl protein methyltransferase family.

The protein localises to the cytoplasm. It carries out the reaction [protein]-L-isoaspartate + S-adenosyl-L-methionine = [protein]-L-isoaspartate alpha-methyl ester + S-adenosyl-L-homocysteine. Catalyzes the methyl esterification of L-isoaspartyl residues in peptides and proteins that result from spontaneous decomposition of normal L-aspartyl and L-asparaginyl residues. It plays a role in the repair and/or degradation of damaged proteins. The sequence is that of Protein-L-isoaspartate O-methyltransferase from Flavobacterium johnsoniae (strain ATCC 17061 / DSM 2064 / JCM 8514 / BCRC 14874 / CCUG 350202 / NBRC 14942 / NCIMB 11054 / UW101) (Cytophaga johnsonae).